The primary structure comprises 209 residues: V-type ATP synthase subunit D (209 aa).

The protein belongs to the V-ATPase D subunit family.

In terms of biological role, produces ATP from ADP in the presence of a proton gradient across the membrane. The sequence is that of V-type ATP synthase subunit D from Anaeromyxobacter dehalogenans (strain 2CP-C).